The primary structure comprises 390 residues: GTPase Obg (390 aa).

An Obg domain is found at 1 to 159 (MKFVDEATIL…RELTLELLLL (159 aa)). The segment at 128 to 147 (SRFKSSVNRAPRQKTNGTKG) is disordered. Over residues 129–145 (RFKSSVNRAPRQKTNGT) the composition is skewed to polar residues. One can recognise an OBG-type G domain in the interval 160-333 (ADVGMLGLPN…LCWDVMNFLK (174 aa)). GTP contacts are provided by residues 166–173 (GLPNAGKS), 191–195 (FTTLV), 213–216 (DIPG), 283–286 (NKVD), and 314–316 (SAA). 2 residues coordinate Mg(2+): Ser-173 and Thr-193.

It belongs to the TRAFAC class OBG-HflX-like GTPase superfamily. OBG GTPase family. As to quaternary structure, monomer. Mg(2+) serves as cofactor.

The protein localises to the cytoplasm. Its function is as follows. An essential GTPase which binds GTP, GDP and possibly (p)ppGpp with moderate affinity, with high nucleotide exchange rates and a fairly low GTP hydrolysis rate. Plays a role in control of the cell cycle, stress response, ribosome biogenesis and in those bacteria that undergo differentiation, in morphogenesis control. The protein is GTPase Obg of Pectobacterium atrosepticum (strain SCRI 1043 / ATCC BAA-672) (Erwinia carotovora subsp. atroseptica).